Reading from the N-terminus, the 65-residue chain is DNA-directed RNA polymerase subunit Rpo10 (65 aa).

4 residues coordinate Zn(2+): C7, C10, C44, and C45.

Belongs to the archaeal Rpo10/eukaryotic RPB10 RNA polymerase subunit family. Part of the RNA polymerase complex. Zn(2+) serves as cofactor.

The protein resides in the cytoplasm. The enzyme catalyses RNA(n) + a ribonucleoside 5'-triphosphate = RNA(n+1) + diphosphate. DNA-dependent RNA polymerase (RNAP) catalyzes the transcription of DNA into RNA using the four ribonucleoside triphosphates as substrates. This Thermococcus onnurineus (strain NA1) protein is DNA-directed RNA polymerase subunit Rpo10.